A 90-amino-acid chain; its full sequence is Probable Fe(2+)-trafficking protein (90 aa).

It belongs to the Fe(2+)-trafficking protein family.

Its function is as follows. Could be a mediator in iron transactions between iron acquisition and iron-requiring processes, such as synthesis and/or repair of Fe-S clusters in biosynthetic enzymes. This Stutzerimonas stutzeri (strain A1501) (Pseudomonas stutzeri) protein is Probable Fe(2+)-trafficking protein.